We begin with the raw amino-acid sequence, 353 residues long: uncharacterized protein (353 aa).

The first 30 residues, 1–30 (MHLRHLFSPRLRGSLLLGSLLVASSFSTLA), serve as a signal peptide directing secretion.

This is an uncharacterized protein from Salmonella typhimurium (strain LT2 / SGSC1412 / ATCC 700720).